A 131-amino-acid polypeptide reads, in one-letter code: uncharacterized protein (131 aa).

Helical transmembrane passes span 52-72 (LIMIGIIELSYFISLGGFYLV) and 97-117 (SDIISIFCSIAFVLFCIYDVG).

It localises to the membrane. This is an uncharacterized protein from Acanthamoeba polyphaga mimivirus (APMV).